We begin with the raw amino-acid sequence, 260 residues long: 3'-5' ssDNA/RNA exonuclease TatD (260 aa).

A divalent metal cation contacts are provided by E91, H127, and H152.

This sequence belongs to the metallo-dependent hydrolases superfamily. TatD-type hydrolase family. TatD subfamily. Monomer. The cofactor is Mg(2+). Mn(2+) serves as cofactor.

The protein resides in the cytoplasm. Its function is as follows. 3'-5' exonuclease that prefers single-stranded DNA and RNA. May play a role in the H(2)O(2)-induced DNA damage repair. This chain is 3'-5' ssDNA/RNA exonuclease TatD, found in Escherichia coli (strain K12).